The following is a 231-amino-acid chain: D-allulose-6-phosphate 3-epimerase (231 aa).

Residue Ser-6 coordinates substrate. Residues His-30, Asp-32, and His-63 each contribute to the a divalent metal cation site. Asp-32 serves as the catalytic Proton acceptor. Residues His-63, 140-143, 173-175, and 195-197 contribute to the substrate site; these read GFAG, DGS, and GTS. Asp-173 lines the a divalent metal cation pocket. The active-site Proton donor is Asp-173.

It belongs to the ribulose-phosphate 3-epimerase family. AlsE subfamily. As to quaternary structure, homohexamer. Trimer of dimers. Co(2+) is required as a cofactor. It depends on Mn(2+) as a cofactor. Zn(2+) serves as cofactor.

The enzyme catalyses D-allulose 6-phosphate = keto-D-fructose 6-phosphate. The protein operates within carbohydrate degradation; D-allose degradation. In terms of biological role, catalyzes the reversible epimerization of D-allulose 6-phosphate to D-fructose 6-phosphate. Can also catalyze with lower efficiency the reversible epimerization of D-ribulose 5-phosphate to D-xylulose 5-phosphate. The sequence is that of D-allulose-6-phosphate 3-epimerase from Escherichia coli (strain K12).